A 253-amino-acid polypeptide reads, in one-letter code: Phosphate import ATP-binding protein PstB 1 (253 aa).

Residues 7-248 (LQIRDLSVYY…PKRKETEDYI (242 aa)) form the ABC transporter domain. 39 to 46 (GPSGSGKS) contributes to the ATP binding site.

This sequence belongs to the ABC transporter superfamily. Phosphate importer (TC 3.A.1.7) family. In terms of assembly, the complex is composed of two ATP-binding proteins (PstB), two transmembrane proteins (PstC and PstA) and a solute-binding protein (PstS).

Its subcellular location is the cell membrane. The enzyme catalyses phosphate(out) + ATP + H2O = ADP + 2 phosphate(in) + H(+). Its function is as follows. Part of the ABC transporter complex PstSACB involved in phosphate import. Responsible for energy coupling to the transport system. The protein is Phosphate import ATP-binding protein PstB 1 of Streptococcus pyogenes serotype M2 (strain MGAS10270).